Reading from the N-terminus, the 533-residue chain is MTEDNIAPITSVKVVTDKCTYKDNELLTKYSYENAVVTKTASGRFDVTPTVQDYVFKLDLKKPEKLGIMLIGLGGNNGSTLVASVLANKHNVEFQTKEGVKQPNYFGSMTQCSTLKLGIDAEGNDVYAPFNSLLPMVSPNDFVVSGWDINNADLYEAMQRSQVLEYDLQQRLKAKMSLVKPLPSIYYPDFIAANQDERANNCINLDEKGNVTTRGKWTHLQRIRRDIQNFKEENALDKVIVLWTANTERYVEVSPGVNDTMENLLQSIKNDHEEIAPSTIFAAASILEGVPYINGSPQNTFVPGLVQLAEHEGTFIAGDDLKSGQTKLKSVLAQFLVDAGIKPVSIASYNHLGNNDGYNLSAPKQFRSKEISKSSVIDDIIASNDILYNDKLGKKVDHCIVIKYMKPVGDSKVAMDEYYSELMLGGHNRISIHNVCEDSLLATPLIIDLLVMTEFCTRVSYKKVDPVKEDAGKFENFYPVLTFLSYWLKAPLTRPGFHPVNGLNKQRTALENFLRLLIGLPSQNELRFEERLL.

A Phosphothreonine modification is found at T48. Residues G74, G75, N76, N77, and D148 each coordinate NAD(+). Phosphoserine occurs at positions 177 and 184. Residues S184, I185, Q195, D196, R198, T244, A245, N246, T247, G295, S296, D320, L321, S323, N354, N355, and D356 each contribute to the NAD(+) site. S296 is modified (phosphoserine). The residue at position 368 (S368) is a Phosphoserine. K369 is an NAD(+) binding site. Position 374 is a phosphoserine (S374). G409, D410, D438, and S439 together coordinate NAD(+).

Belongs to the myo-inositol 1-phosphate synthase family. Homotetramer. Requires NAD(+) as cofactor. In terms of processing, phosphorylation at Ser-184 and Ser-374 is associated with a decrease in activity. Increasingly phosphorylated in presence of valproate.

It is found in the cytoplasm. The catalysed reaction is D-glucose 6-phosphate = 1D-myo-inositol 3-phosphate. It participates in polyol metabolism; myo-inositol biosynthesis; myo-inositol from D-glucose 6-phosphate: step 1/2. Competitively inhibited by myo-2-inosose 1-phosphate, which is also an intermediate in the catalytic reaction. Competitively inhibited by 2-deoxy-myo-inositol 1-phosphate (dMIP), 1-deoxy-1-(phosphonomethyl)-myo-2-inosose (DPMI), dihydroxyacetone phosphate (DHAP), 6-deoxy-D-glucose 6-(E)-vinylhomophosphonate, 6-deoxy-D-glucitol 6-(E)-vinylhomophosphonate, 2,6-dideoxy-D-glucose 6-(E)-vinylhomophosphonate and 2,6-dideoxy-D-glucitol 6-(E)-vinylhomophosphonate. Inhibited by 2-deoxyglucitol 6-phosphate (dgtolP). Functionally, key enzyme in myo-inositol biosynthesis pathway that catalyzes the conversion of glucose 6-phosphate to 1-myo-inositol 1-phosphate in a NAD-dependent manner. Rate-limiting enzyme in the synthesis of all inositol-containing compounds. This chain is Inositol-3-phosphate synthase (INO1), found in Saccharomyces cerevisiae (strain ATCC 204508 / S288c) (Baker's yeast).